The sequence spans 360 residues: 3-dehydroquinate synthase (360 aa).

NAD(+) contacts are provided by residues 70–75 (DGEKYK), 104–108 (GVIGD), 128–129 (TT), Lys-141, and Lys-150. Zn(2+)-binding residues include Glu-183, His-246, and His-263.

It belongs to the sugar phosphate cyclases superfamily. Dehydroquinate synthase family. Co(2+) serves as cofactor. Requires Zn(2+) as cofactor. NAD(+) is required as a cofactor.

It localises to the cytoplasm. It carries out the reaction 7-phospho-2-dehydro-3-deoxy-D-arabino-heptonate = 3-dehydroquinate + phosphate. It functions in the pathway metabolic intermediate biosynthesis; chorismate biosynthesis; chorismate from D-erythrose 4-phosphate and phosphoenolpyruvate: step 2/7. Catalyzes the conversion of 3-deoxy-D-arabino-heptulosonate 7-phosphate (DAHP) to dehydroquinate (DHQ). This is 3-dehydroquinate synthase from Acinetobacter baumannii (strain SDF).